A 379-amino-acid polypeptide reads, in one-letter code: Succinyl-diaminopimelate desuccinylase (379 aa).

A Zn(2+)-binding site is contributed by H68. The active site involves D70. D101 contributes to the Zn(2+) binding site. The Proton acceptor role is filled by E135. E136, E164, and H350 together coordinate Zn(2+).

The protein belongs to the peptidase M20A family. DapE subfamily. Homodimer. Zn(2+) is required as a cofactor. It depends on Co(2+) as a cofactor.

It catalyses the reaction N-succinyl-(2S,6S)-2,6-diaminopimelate + H2O = (2S,6S)-2,6-diaminopimelate + succinate. It participates in amino-acid biosynthesis; L-lysine biosynthesis via DAP pathway; LL-2,6-diaminopimelate from (S)-tetrahydrodipicolinate (succinylase route): step 3/3. In terms of biological role, catalyzes the hydrolysis of N-succinyl-L,L-diaminopimelic acid (SDAP), forming succinate and LL-2,6-diaminopimelate (DAP), an intermediate involved in the bacterial biosynthesis of lysine and meso-diaminopimelic acid, an essential component of bacterial cell walls. This Bordetella bronchiseptica (strain ATCC BAA-588 / NCTC 13252 / RB50) (Alcaligenes bronchisepticus) protein is Succinyl-diaminopimelate desuccinylase.